The chain runs to 134 residues: Acyl-CoA thioester hydrolase YbgC (134 aa).

The active site involves D18.

The protein belongs to the 4-hydroxybenzoyl-CoA thioesterase family.

It localises to the cell inner membrane. In terms of biological role, thioesterase that appears to be involved in phospholipid metabolism. Some specific acyl-ACPs could be physiological substrates. Displays acyl-CoA thioesterase activity on malonyl-CoA in vitro, catalyzing the hydrolysis of the thioester bond. The protein is Acyl-CoA thioester hydrolase YbgC (ybgC) of Escherichia coli O157:H7.